A 551-amino-acid polypeptide reads, in one-letter code: Cytochrome P450 monooxygenase virE (551 aa).

Positions 1–25 are cleaved as a signal peptide; sequence MPKPWVVFGLGTLVLFLWRLNKIGR. The N-linked (GlcNAc...) asparagine glycan is linked to Asn392. Cys439 is a binding site for heme.

This sequence belongs to the cytochrome P450 family. It depends on heme as a cofactor.

Its pathway is secondary metabolite biosynthesis. Its function is as follows. Cytochrome P450 monooxygenase; part of the gene cluster that mediates the biosynthesis of virensols and trichoxide, fungal natural products that contain or are derived from a salicylaldehyde core. The pathway begins with the synthesis of the reduced chain in virensol C by the highly reducing polyketide synthase virA via condensation of one acetate and 8 malonate units. VirA has interesting programming rules since the first 2 ketides are fully reduced, the 3 following ketides undergo beta-dehydration, and the last 3 ketides are only reduced to beta-hydroxys to yield the trihydroxy portion. The production of aldehyde virensol C by virA alone is surprising, since virA does not contain a reductase (R) domain that is typically associated with reductive product release in HRPKS. The cupin-domain enzyme virC is involved in enhancing virA product turnover. The short-chain dehydrogenase virB then oxidizes the C-7 alcohol of virensol C to a ketone, yielding virensol D. Virensol D is further transformed to salicylaldehyde 5-deoxyaurocitrin by the short-chain dehydrogenase virD. VirD catalyzes the dehydrogenation of C-3 to form the beta-ketone aldehyde, which is followed by the generation of the nucleophilic C-2 that is required for the intramolecular aldol condensation between C-2 and C-7, itself followed by dehydration and aromatization which leads to salicylaldehyde 5-deoxyaurocitrin. While the dehydrogenation of virensol D is definitely catalyzed by virD, the aldol condensation and dehydration may be uncatalyzed or assisted by virD. The short chain dehydrogenase virG then converts salicylaldehyde 5-deoxyaurocitrin into virensol B which is further hydroxylated by the cytochrome P450 monooxygenase virE to yield the hydroquinone virensol A. VirI then may oxidize virensol A to form the quinone, while virH performs the epoxidation. Finally, the two remaining short-chain dehydrogenases, virK and virL, are probably responsible for reducing the ketones to the corresponding alcohols to furnish the epoxycyclohexanol structure in trichoxide. This Hypocrea virens (strain Gv29-8 / FGSC 10586) (Gliocladium virens) protein is Cytochrome P450 monooxygenase virE.